A 209-amino-acid chain; its full sequence is N-acetyltransferase aca1 (209 aa).

The N-acetyltransferase domain occupies 26–202 (TNVKNKEELL…DAYIYQYHFP (177 aa)). N118 is a binding site for substrate. 128-133 (RSKGIG) lines the CoA pocket. Residue 155 to 156 (NL) participates in substrate binding.

The protein belongs to the acetyltransferase family. As to quaternary structure, homodimer.

Its subcellular location is the cytoplasm. It is found in the mitochondrion. The catalysed reaction is L-glutamate 5-semialdehyde + acetyl-CoA = N-acetyl-L-glutamate 5-semialdehyde + CoA + H(+). Its function is as follows. N-acetyltransferase involved in oxidative stress resistance. Acetylates the toxic proline metabolism intermediate (S)-1-pyrroline-5-carboxylate (P5C), or more likely its spontaneously forming tautomer glutamate-5-semialdehyde (GSA) into N-acetyl-GSA for arginine synthesis in the mitochondria. P5C has been shown to increase the levels of reactive oxygen species (ROS) in the cell by inhibiting the function of the respiratory chain in the mitochondria. The enzyme is able to reduce intracellular ROS levels under P5C-induced oxidative stress and protects cells from damage by oxidative stress. Also acetylates and thereby detoxifies the proline analog azetidine-2-carboxylate (AZC), however it is unlikely that AZC is a natural substrate as it occurs only in plants belonging to the Lilaceae family. In Schizosaccharomyces pombe (strain 972 / ATCC 24843) (Fission yeast), this protein is N-acetyltransferase aca1.